Here is a 249-residue protein sequence, read N- to C-terminus: Ditrans,polycis-undecaprenyl-diphosphate synthase ((2E,6E)-farnesyl-diphosphate specific) (249 aa).

Residue aspartate 29 is part of the active site. Aspartate 29 contacts Mg(2+). Residues 30 to 33, tryptophan 34, arginine 42, histidine 46, and 74 to 76 contribute to the substrate site; these read GNGR and STE. Asparagine 77 functions as the Proton acceptor in the catalytic mechanism. Residues tryptophan 78, arginine 80, arginine 197, and 203–205 contribute to the substrate site; that span reads RLS. Residue glutamate 216 coordinates Mg(2+).

The protein belongs to the UPP synthase family. Homodimer. Requires Mg(2+) as cofactor.

It catalyses the reaction 8 isopentenyl diphosphate + (2E,6E)-farnesyl diphosphate = di-trans,octa-cis-undecaprenyl diphosphate + 8 diphosphate. Generates ditrans,octacis-undecaprenyl pyrophosphate (UPP) from isopentenyl pyrophosphate (IPP) and farnesyl diphosphate. UPP is the precursor of glycosyl carrier lipid in the biosynthesis of bacterial cell wall polysaccharide components such as peptidoglycan and lipopolysaccharide. This chain is Ditrans,polycis-undecaprenyl-diphosphate synthase ((2E,6E)-farnesyl-diphosphate specific) (uppS), found in Micrococcus luteus (Micrococcus lysodeikticus).